A 439-amino-acid polypeptide reads, in one-letter code: Sorting nexin-31 (439 aa).

In terms of domain architecture, PX spans 1–109; sequence MKMHFCIPVS…EFLTLVQLHT (109 aa). The segment at 384-409 is disordered; sequence TEQSPEMQIEVPEQGRSKKHPSQPSQ.

This sequence belongs to the sorting nexin family. In terms of assembly, interacts with CCDC22, CCDC93, VPS26C and VPS35L, associates with the retriever and CCC complexes.

Functionally, may be involved in protein trafficking. This is Sorting nexin-31 (Snx31) from Mus musculus (Mouse).